Consider the following 295-residue polypeptide: Nucleotide-binding protein EF_0766 (295 aa).

12–19 (GMSGAGKT) contributes to the ATP binding site. Residue 62-65 (DLRS) participates in GTP binding.

The protein belongs to the RapZ-like family.

In terms of biological role, displays ATPase and GTPase activities. This Enterococcus faecalis (strain ATCC 700802 / V583) protein is Nucleotide-binding protein EF_0766.